We begin with the raw amino-acid sequence, 514 residues long: Sugar transport protein 10 (514 aa).

The Cytoplasmic segment spans residues 1 to 18; that stretch reads MAGGAFVSEGGGGGRSYE. Transmembrane regions (helical) follow at residues 19 to 39, 86 to 106, 113 to 133, 135 to 155, 170 to 190, 204 to 224, 285 to 305, 320 to 340, 350 to 370, and 389 to 409; these read GGVT…GLLF, LFTS…SVIT, VSMF…AFAV, VSML…ANQS, GALN…ANLI, VSLG…FILP, LIFC…VIMF, AALM…FVSI, LLFL…GSFI, and WILA…GPLG. An intrachain disulfide couples cysteine 77 to cysteine 449. Beta-D-glucose is bound at residue glutamine 177. Beta-D-glucose is bound by residues glutamine 295, glutamine 296, asparagine 301, and asparagine 332. Position 410 (tryptophan 410) interacts with beta-D-glucose. Transmembrane regions (helical) follow at residues 428–448 and 453–473; these read INVS…LTML and FGLF…IYFL. The Cytoplasmic portion of the chain corresponds to 474–514; sequence LPETKGVPIEEMGRVWKQHWFWKKYIPEDAIIGGHDDNNTN.

It belongs to the major facilitator superfamily. Sugar transporter (TC 2.A.1.1) family. As to expression, expressed in primordia of lateral roots, pollinated stigmata, and pollen tubes.

The protein localises to the membrane. The enzyme catalyses D-glucose(out) + H(+)(out) = D-glucose(in) + H(+)(in). It catalyses the reaction D-mannose(out) + H(+)(out) = D-mannose(in) + H(+)(in). The catalysed reaction is D-galactose(in) + H(+)(in) = D-galactose(out) + H(+)(out). In terms of biological role, hexose-H(+) symporter that catalyzes the high-affinity uptake of glucose, galactose and mannose. Proton-coupled symporter responsible for the uptake of glucose from the apoplast into the cells. This is Sugar transport protein 10 from Arabidopsis thaliana (Mouse-ear cress).